The primary structure comprises 339 residues: Ferrochelatase (339 aa).

Residues His202 and Glu283 each contribute to the Fe cation site.

The protein belongs to the ferrochelatase family.

The protein localises to the cytoplasm. The enzyme catalyses heme b + 2 H(+) = protoporphyrin IX + Fe(2+). Its pathway is porphyrin-containing compound metabolism; protoheme biosynthesis; protoheme from protoporphyrin-IX: step 1/1. Its function is as follows. Catalyzes the ferrous insertion into protoporphyrin IX. The sequence is that of Ferrochelatase from Psychrobacter sp. (strain PRwf-1).